Here is a 282-residue protein sequence, read N- to C-terminus: Pyrroline-5-carboxylate reductase (282 aa).

This sequence belongs to the pyrroline-5-carboxylate reductase family.

It catalyses the reaction L-proline + NADP(+) = (S)-1-pyrroline-5-carboxylate + NADPH + 2 H(+). The enzyme catalyses L-proline + NAD(+) = (S)-1-pyrroline-5-carboxylate + NADH + 2 H(+). It participates in amino-acid biosynthesis; L-proline biosynthesis; L-proline from L-glutamate 5-semialdehyde: step 1/1. This is Pyrroline-5-carboxylate reductase (pro3) from Schizosaccharomyces pombe (strain 972 / ATCC 24843) (Fission yeast).